A 707-amino-acid polypeptide reads, in one-letter code: MSPFLRIGLSNFDCGTCQACQGEAVNPYCAVLVKEYVESENGQMYIQKKPTMYPPWDSTFDAHINKGRVMQIIVKGKNVDLISETTVELYSLAERCRKNNGRTEIWLELKPQGRMLMNARYFLEMSDTKDMSEFENEGFFALHHRRGAIKQAKVHHVKCHEFTATFFPQPTFCSVCHEFVWGLNKQGYQCRRCNAAIHKKCIDKVIAKCTGSAINSRETMFHKERFKIDMPHRFKVYNYKSPTFCEHCGTLLWGLARQGLKCDACGMNVHHRCQTKVANLCGINQKLMAEALAMIESTQQARTLRDSEHIFREGPIEISFPRSIKSETRPPCVPTPGKSEPQGICWESPLDGADKTAQPPEPEVNLQRASLQLKLKIDDFILHKMLGKGSFGKVFLAEFKRTKQFFAIKALKKDVVLMDDDVECTMVEKRVLSLAWEHPFLTHMFCTFQTKENLFFVMEYLNGGDLMYHIQSCHKFDLSRATFYAAEVILGLQFLHSKGIVYRDLKLDNILLDRDGHIKIADFGMCKENMLGDAKTNTFCGTPDYIAPEILLGQKYNHSVDWWSFGVLLYEMLIGQSPFHGQDEEELFHSIRMDNPFYPRWLEREAKDLLVKLFVREPEKRLGVRGDIRQHPLFREINWEELERKEIDPPFRPKVKSPYDCSNFDKEFLSEKPRLSFADRALINSMDQNMFSNFSFINPGMETLICS.

A C2 domain is found at 1-107; the sequence is MSPFLRIGLS…KNNGRTEIWL (107 aa). Y90 carries the phosphotyrosine; by LCK modification. Residues 159 to 209 form a Phorbol-ester/DAG-type 1 zinc finger; the sequence is CHEFTATFFPQPTFCSVCHEFVWGLNKQGYQCRRCNAAIHKKCIDKVIAKC. Position 219 is a phosphothreonine; by autocatalysis (T219). The Phorbol-ester/DAG-type 2 zinc finger occupies 231–281; that stretch reads PHRFKVYNYKSPTFCEHCGTLLWGLARQGLKCDACGMNVHHRCQTKVANLC. A Phosphoserine modification is found at S348. The 255-residue stretch at 380–634 folds into the Protein kinase domain; that stretch reads FILHKMLGKG…RGDIRQHPLF (255 aa). Residues 386–394 and K409 each bind ATP; that span reads LGKGSFGKV. The Proton acceptor role is filled by D504. Residue T538 is modified to Phosphothreonine; by PDPK1. One can recognise an AGC-kinase C-terminal domain in the interval 635 to 706; that stretch reads REINWEELER…INPGMETLIC (72 aa). A phosphoserine mark is found at S676 and S685. Phosphoserine; by autocatalysis is present on S695.

This sequence belongs to the protein kinase superfamily. AGC Ser/Thr protein kinase family. PKC subfamily. As to quaternary structure, part of a membrane raft complex composed at least of BCL10, CARD11, MALT1 and IKBKB. Interacts with GLRX3 (via N-terminus). Interacts with ECT2. Interacts with CCDC88A/GIV; the interaction leads to phosphorylation of CCDC88A and inhibition of its guanine nucleotide exchange factor activity. Interacts with CD28. Mg(2+) is required as a cofactor. In terms of processing, autophosphorylation at Thr-219 is required for targeting to the TCR and cellular function of PRKCQ upon antigen receptor ligation. Following TCR stimulation, phosphorylated at Tyr-90 and Ser-685.

The protein localises to the cytoplasm. The protein resides in the cell membrane. The catalysed reaction is L-seryl-[protein] + ATP = O-phospho-L-seryl-[protein] + ADP + H(+). It carries out the reaction L-threonyl-[protein] + ATP = O-phospho-L-threonyl-[protein] + ADP + H(+). Its activity is regulated as follows. Novel PKCs (PRKCD, PRKCE, PRKCH and PRKCQ) are calcium-insensitive, but activated by diacylglycerol (DAG) and phosphatidylserine. Three specific sites; Thr-538 (activation loop of the kinase domain), Ser-676 (turn motif) and Ser-695 (hydrophobic region), need to be phosphorylated for its full activation. Calcium-independent, phospholipid- and diacylglycerol (DAG)-dependent serine/threonine-protein kinase that mediates non-redundant functions in T-cell receptor (TCR) signaling, including T-cells activation, proliferation, differentiation and survival, by mediating activation of multiple transcription factors such as NF-kappa-B, JUN, NFATC1 and NFATC2. In TCR-CD3/CD28-co-stimulated T-cells, is required for the activation of NF-kappa-B and JUN, which in turn are essential for IL2 production, and participates in the calcium-dependent NFATC1 and NFATC2 transactivation. Mediates the activation of the canonical NF-kappa-B pathway (NFKB1) by direct phosphorylation of CARD11 on several serine residues, inducing CARD11 association with lipid rafts and recruitment of the BCL10-MALT1 complex, which then activates IKK complex, resulting in nuclear translocation and activation of NFKB1. May also play an indirect role in activation of the non-canonical NF-kappa-B (NFKB2) pathway. In the signaling pathway leading to JUN activation, acts by phosphorylating the mediator STK39/SPAK and may not act through MAP kinases signaling. Plays a critical role in TCR/CD28-induced NFATC1 and NFATC2 transactivation by participating in the regulation of reduced inositol 1,4,5-trisphosphate generation and intracellular calcium mobilization. After costimulation of T-cells through CD28 can phosphorylate CBLB and is required for the ubiquitination and subsequent degradation of CBLB, which is a prerequisite for the activation of TCR. During T-cells differentiation, plays an important role in the development of T-helper 2 (Th2) cells following immune and inflammatory responses, and, in the development of inflammatory autoimmune diseases, is necessary for the activation of IL17-producing Th17 cells. May play a minor role in Th1 response. Upon TCR stimulation, mediates T-cell protective survival signal by phosphorylating BAD, thus protecting T-cells from BAD-induced apoptosis, and by up-regulating BCL-X(L)/BCL2L1 levels through NF-kappa-B and JUN pathways. In platelets, regulates signal transduction downstream of the ITGA2B, CD36/GP4, F2R/PAR1 and F2RL3/PAR4 receptors, playing a positive role in 'outside-in' signaling and granule secretion signal transduction. May relay signals from the activated ITGA2B receptor by regulating the uncoupling of WASP and WIPF1, thereby permitting the regulation of actin filament nucleation and branching activity of the Arp2/3 complex. May mediate inhibitory effects of free fatty acids on insulin signaling by phosphorylating IRS1, which in turn blocks IRS1 tyrosine phosphorylation and downstream activation of the PI3K/AKT pathway. Phosphorylates MSN (moesin) in the presence of phosphatidylglycerol or phosphatidylinositol. Phosphorylates PDPK1 at 'Ser-504' and 'Ser-532' and negatively regulates its ability to phosphorylate PKB/AKT1. Phosphorylates CCDC88A/GIV and inhibits its guanine nucleotide exchange factor activity. Phosphorylates and activates LRRK1, which phosphorylates RAB proteins involved in intracellular trafficking. This Rattus norvegicus (Rat) protein is Protein kinase C theta type (Prkcq).